Here is a 1104-residue protein sequence, read N- to C-terminus: DNA polymerase delta catalytic subunit (1104 aa).

The disordered stretch occupies residues Met-1–Asp-60. Positions Asp-31–Asp-60 are enriched in acidic residues. Cys-1012, Cys-1015, Cys-1027, and Cys-1030 together coordinate Zn(2+). The segment at Cys-1012–Cys-1030 adopts a CysA-type zinc-finger fold. [4Fe-4S] cluster is bound by residues Cys-1059, Cys-1062, Cys-1072, and Cys-1077. The short motif at Cys-1059–Cys-1077 is the CysB motif element.

Belongs to the DNA polymerase type-B family. Heterotetramer composed of subunits of 125 kDa, 50 kDa, 66 kDa and 12 kDa. The 125 kDa subunit contains the polymerase active site and most likely the active site for the 3'-5' exonuclease activity. It depends on [4Fe-4S] cluster as a cofactor.

The protein resides in the nucleus. It carries out the reaction DNA(n) + a 2'-deoxyribonucleoside 5'-triphosphate = DNA(n+1) + diphosphate. Its function is as follows. Possesses two enzymatic activities: DNA synthesis (polymerase) and an exonucleolytic activity that degrades single stranded DNA in the 3'- to 5'-direction. This Dictyostelium discoideum (Social amoeba) protein is DNA polymerase delta catalytic subunit (pold1).